Here is a 748-residue protein sequence, read N- to C-terminus: Photosystem I P700 chlorophyll a apoprotein A1 (748 aa).

Helical transmembrane passes span 69-92 (IFSA…FHGA), 155-178 (LYVT…FHYH), 194-218 (LNHH…HVSL), 290-308 (VAHH…GHMY), 345-368 (WHAN…HHMY), 384-410 (LSLF…IYMV), 432-454 (AIIS…LYIH), and 529-547 (FMVH…LILL). [4Fe-4S] cluster-binding residues include cysteine 571 and cysteine 580. 2 consecutive transmembrane segments (helical) span residues 587-608 (HVFL…HFSW) and 662-684 (LSAY…MFLF). Histidine 673 contributes to the chlorophyll a' binding site. 2 residues coordinate chlorophyll a: methionine 681 and tyrosine 689. Residue tryptophan 690 coordinates phylloquinone. A helical membrane pass occupies residues 722–742 (AVGVAHYLLGGIATTWAFFLA).

The protein belongs to the PsaA/PsaB family. The PsaA/B heterodimer binds the P700 chlorophyll special pair and subsequent electron acceptors. PSI consists of a core antenna complex that captures photons, and an electron transfer chain that converts photonic excitation into a charge separation. The eukaryotic PSI reaction center is composed of at least 11 subunits. It depends on P700 is a chlorophyll a/chlorophyll a' dimer, A0 is one or more chlorophyll a, A1 is one or both phylloquinones and FX is a shared 4Fe-4S iron-sulfur center. as a cofactor.

The protein resides in the plastid. It localises to the chloroplast thylakoid membrane. It carries out the reaction reduced [plastocyanin] + hnu + oxidized [2Fe-2S]-[ferredoxin] = oxidized [plastocyanin] + reduced [2Fe-2S]-[ferredoxin]. Its function is as follows. PsaA and PsaB bind P700, the primary electron donor of photosystem I (PSI), as well as the electron acceptors A0, A1 and FX. PSI is a plastocyanin/cytochrome c6-ferredoxin oxidoreductase, converting photonic excitation into a charge separation, which transfers an electron from the donor P700 chlorophyll pair to the spectroscopically characterized acceptors A0, A1, FX, FA and FB in turn. Oxidized P700 is reduced on the lumenal side of the thylakoid membrane by plastocyanin or cytochrome c6. The chain is Photosystem I P700 chlorophyll a apoprotein A1 from Cyanidioschyzon merolae (strain NIES-3377 / 10D) (Unicellular red alga).